The following is a 53-amino-acid chain: ATP synthase protein 8 (53 aa).

The chain crosses the membrane as a helical span at residues 5–25 (APISWLTLFFVFSITLVIFNI).

Belongs to the ATPase protein 8 family. As to quaternary structure, F-type ATPases have 2 components, CF(1) - the catalytic core - and CF(0) - the membrane proton channel.

The protein localises to the mitochondrion membrane. Mitochondrial membrane ATP synthase (F(1)F(O) ATP synthase or Complex V) produces ATP from ADP in the presence of a proton gradient across the membrane which is generated by electron transport complexes of the respiratory chain. F-type ATPases consist of two structural domains, F(1) - containing the extramembraneous catalytic core and F(0) - containing the membrane proton channel, linked together by a central stalk and a peripheral stalk. During catalysis, ATP synthesis in the catalytic domain of F(1) is coupled via a rotary mechanism of the central stalk subunits to proton translocation. Part of the complex F(0) domain. Minor subunit located with subunit a in the membrane. This Aedes aegypti (Yellowfever mosquito) protein is ATP synthase protein 8.